Here is a 280-residue protein sequence, read N- to C-terminus: tRNA (guanine-N(1)-)-methyltransferase (280 aa).

Residues 71-94 are disordered; sequence DDVSSGTASTQDLQSALPHLSKPR. The segment covering 74-84 has biased composition (polar residues); that stretch reads SSGTASTQDLQ. S-adenosyl-L-methionine is bound by residues Gly-146 and 170-175; that span reads IGDYVL.

Belongs to the RNA methyltransferase TrmD family. In terms of assembly, homodimer.

Its subcellular location is the cytoplasm. The catalysed reaction is guanosine(37) in tRNA + S-adenosyl-L-methionine = N(1)-methylguanosine(37) in tRNA + S-adenosyl-L-homocysteine + H(+). Specifically methylates guanosine-37 in various tRNAs. The protein is tRNA (guanine-N(1)-)-methyltransferase of Corynebacterium aurimucosum (strain ATCC 700975 / DSM 44827 / CIP 107346 / CN-1) (Corynebacterium nigricans).